The primary structure comprises 277 residues: Phosphoenolpyruvate synthase regulatory protein (277 aa).

ADP is bound at residue 157 to 164 (GVSRCGKT).

The protein belongs to the pyruvate, phosphate/water dikinase regulatory protein family. PSRP subfamily.

The catalysed reaction is [pyruvate, water dikinase] + ADP = [pyruvate, water dikinase]-phosphate + AMP + H(+). It carries out the reaction [pyruvate, water dikinase]-phosphate + phosphate + H(+) = [pyruvate, water dikinase] + diphosphate. Bifunctional serine/threonine kinase and phosphorylase involved in the regulation of the phosphoenolpyruvate synthase (PEPS) by catalyzing its phosphorylation/dephosphorylation. The sequence is that of Phosphoenolpyruvate synthase regulatory protein from Escherichia coli O17:K52:H18 (strain UMN026 / ExPEC).